The following is a 1276-amino-acid chain: Probable outer membrane protein pmp6 (1276 aa).

The N-terminal stretch at 1-23 (MKYSLPWLLTSSALVFSLHPLMA) is a signal peptide. One can recognise an Autotransporter domain in the interval 981–1276 (DAPSHPGIWI…NANCGTRYSF (296 aa)).

The protein belongs to the PMP outer membrane protein family.

It is found in the secreted. It localises to the cell wall. Its subcellular location is the cell outer membrane. This is Probable outer membrane protein pmp6 (pmp6) from Chlamydia pneumoniae (Chlamydophila pneumoniae).